The sequence spans 145 residues: LIM domain only protein 3 (145 aa).

LIM zinc-binding domains follow at residues 11-73 and 75-137; these read KGCA…LFGV and GNCA…GLMK.

The chain is LIM domain only protein 3 from Danio rerio (Zebrafish).